Consider the following 261-residue polypeptide: Uridine-cytidine kinase 2 (261 aa).

A disordered region spans residues 1–24 (MAGDSEQALPKHSPQNGQPFLIGV). Residue 26 to 34 (GGTASGKSS) participates in ATP binding. Substrate-binding residues include D83, Y111, H116, R165, R175, and Q183. D212 lines the ATP pocket. A compositionally biased stretch (polar residues) spans 238–247 (NGYTNGFTSP). A disordered region spans residues 238 to 261 (NGYTNGFTSPRTRHPSDSNSSRPH).

It belongs to the uridine kinase family. In terms of assembly, homotetramer.

It catalyses the reaction uridine + ATP = UMP + ADP + H(+). The catalysed reaction is cytidine + ATP = CMP + ADP + H(+). It participates in pyrimidine metabolism; CTP biosynthesis via salvage pathway; CTP from cytidine: step 1/3. Its pathway is pyrimidine metabolism; UMP biosynthesis via salvage pathway; UMP from uridine: step 1/1. Phosphorylates uridine and cytidine to uridine monophosphate and cytidine monophosphate. Does not phosphorylate deoxyribonucleosides or purine ribonucleosides. Can use ATP or GTP as a phosphate donor. The sequence is that of Uridine-cytidine kinase 2 (uck2) from Xenopus tropicalis (Western clawed frog).